The chain runs to 510 residues: Light-independent protochlorophyllide reductase subunit B (510 aa).

Asp36 contributes to the [4Fe-4S] cluster binding site. Asp296 serves as the catalytic Proton donor. Substrate is bound at residue 431–432 (GM).

It belongs to the ChlB/BchB/BchZ family. Protochlorophyllide reductase is composed of three subunits; ChlL, ChlN and ChlB. Forms a heterotetramer of two ChlB and two ChlN subunits. [4Fe-4S] cluster is required as a cofactor.

The protein resides in the plastid. It localises to the chloroplast. It catalyses the reaction chlorophyllide a + oxidized 2[4Fe-4S]-[ferredoxin] + 2 ADP + 2 phosphate = protochlorophyllide a + reduced 2[4Fe-4S]-[ferredoxin] + 2 ATP + 2 H2O. Its pathway is porphyrin-containing compound metabolism; chlorophyll biosynthesis (light-independent). In terms of biological role, component of the dark-operative protochlorophyllide reductase (DPOR) that uses Mg-ATP and reduced ferredoxin to reduce ring D of protochlorophyllide (Pchlide) to form chlorophyllide a (Chlide). This reaction is light-independent. The NB-protein (ChlN-ChlB) is the catalytic component of the complex. The protein is Light-independent protochlorophyllide reductase subunit B of Physcomitrium patens (Spreading-leaved earth moss).